Consider the following 252-residue polypeptide: Probable transcriptional regulatory protein Ava_1228 (252 aa).

This sequence belongs to the TACO1 family.

It localises to the cytoplasm. The sequence is that of Probable transcriptional regulatory protein Ava_1228 from Trichormus variabilis (strain ATCC 29413 / PCC 7937) (Anabaena variabilis).